Consider the following 131-residue polypeptide: Large ribosomal subunit protein bL20 (131 aa).

Belongs to the bacterial ribosomal protein bL20 family.

In terms of biological role, binds directly to 23S ribosomal RNA and is necessary for the in vitro assembly process of the 50S ribosomal subunit. It is not involved in the protein synthesizing functions of that subunit. This Mycolicibacterium paratuberculosis (strain ATCC BAA-968 / K-10) (Mycobacterium paratuberculosis) protein is Large ribosomal subunit protein bL20.